A 347-amino-acid chain; its full sequence is NADH-ubiquinone oxidoreductase chain 2 (347 aa).

Transmembrane regions (helical) follow at residues 1–21, 25–45, 59–79, 96–116, 122–142, 149–169, 178–198, 200–220, 237–257, 274–294, and 325–345; these read MNPLILIILLTTLILGTMMVV, HWLLAWIGFEMNMMAFIPIMM, YLLTQATASALLMMAVIINLM, TLMTVALAIKLGLAPFHFWVP, IPLTTGLILLTWQKLAPLSIL, INLHLMLIMSLLSILMGGWGG, IMAYSSIAHMGWMTAILLYNP, LTLLNLLIYITMTFTMFMLFI, MPVITTLTMLTLLSMGGLPPL, DMLIVPTFMAITALLNLYFYM, and LLPTAIVISTMLLPLTPMLSI.

It belongs to the complex I subunit 2 family. Core subunit of respiratory chain NADH dehydrogenase (Complex I) which is composed of 45 different subunits. Interacts with TMEM242.

Its subcellular location is the mitochondrion inner membrane. It carries out the reaction a ubiquinone + NADH + 5 H(+)(in) = a ubiquinol + NAD(+) + 4 H(+)(out). Its function is as follows. Core subunit of the mitochondrial membrane respiratory chain NADH dehydrogenase (Complex I) which catalyzes electron transfer from NADH through the respiratory chain, using ubiquinone as an electron acceptor. Essential for the catalytic activity and assembly of complex I. The chain is NADH-ubiquinone oxidoreductase chain 2 from Balaenoptera physalus (Fin whale).